The primary structure comprises 221 residues: N-(5'-phosphoribosyl)anthranilate isomerase (221 aa).

Belongs to the TrpF family.

The enzyme catalyses N-(5-phospho-beta-D-ribosyl)anthranilate = 1-(2-carboxyphenylamino)-1-deoxy-D-ribulose 5-phosphate. It functions in the pathway amino-acid biosynthesis; L-tryptophan biosynthesis; L-tryptophan from chorismate: step 3/5. The polypeptide is N-(5'-phosphoribosyl)anthranilate isomerase (Parabacteroides distasonis (strain ATCC 8503 / DSM 20701 / CIP 104284 / JCM 5825 / NCTC 11152)).